The chain runs to 448 residues: Iroquois-class homeodomain protein irx-3 (448 aa).

The segment at residues D108–N170 is a DNA-binding region (homeobox; TALE-type). Positions K171–N247 are disordered. The segment covering K195–D222 has biased composition (acidic residues). Over residues T223–S237 the composition is skewed to basic and acidic residues. Positions E238–N247 are enriched in acidic residues.

Belongs to the TALE/IRO homeobox family. As to expression, primarily expressed in the developing central nervous system (CNS). At gastrula stage, expressed in both the superficial and deep layers of the presumptive neural plate with expression spreading to the prospective hindbrain, spinal cord and midbrain-hindbrain junction as neurulation proceeds. Not expressed in the anterior neural plate and CNS expression in the tadpole excludes the forebrain. Outside of the CNS, expressed around the closing blastopore at early gastrula stages and as gastrulation proceeds, expression switches to the anterior lateral plate mesoderm. In tadpoles, expressed in the ectodermal layer of the branchial arches, and in the otic vesicle. Also expressed in specific and overlapping dynamic patterns with irx1 and irx2 during pronephric kidney development. Renal expression begins before segment-specific terminal differentiation in the pronephric anlage at mid-neurula stage, and is later found in proximal tubule PT3 as well as intermediate tubule segments IT1 and IT2, with expression in the kidney being maintained through to the tadpole stage.

Its subcellular location is the nucleus. In terms of biological role, acts partially redundantly with other irx members in neural patterning. Required for formation of the posterior forebrain, midbrain, hindbrain, and to a lesser extent, spinal cord. Both up-regulates and down-regulates gene expression during neural development. Acts early in neural plate development to induce proneural gene expression and specify a neural precursor state. Also up-regulates repressors that prevent neuronal differentiation. Required during at least two stages of pronephros kidney development; during neurula stages, maintains transcription of key renal genes to define the size and identity of the pronephric anlage, probably in part through regulation of bmp-signaling. Subsequently required for proper formation of the intermediate tubule segment of the pronephros. This Xenopus laevis (African clawed frog) protein is Iroquois-class homeodomain protein irx-3 (irx3).